We begin with the raw amino-acid sequence, 407 residues long: Peptidase T (407 aa).

Residue H82 participates in Zn(2+) binding. D84 is an active-site residue. D143 provides a ligand contact to Zn(2+). E177 (proton acceptor) is an active-site residue. Zn(2+) is bound by residues E178, D200, and H382.

This sequence belongs to the peptidase M20B family. Zn(2+) serves as cofactor.

It localises to the cytoplasm. The catalysed reaction is Release of the N-terminal residue from a tripeptide.. In terms of biological role, cleaves the N-terminal amino acid of tripeptides. This is Peptidase T from Streptococcus thermophilus (strain ATCC BAA-491 / LMD-9).